The chain runs to 183 residues: Putative 3-methyladenine DNA glycosylase (183 aa).

The protein belongs to the DNA glycosylase MPG family.

The chain is Putative 3-methyladenine DNA glycosylase from Wolbachia pipientis subsp. Culex pipiens (strain wPip).